Here is a 719-residue protein sequence, read N- to C-terminus: MRGALCRPDVLMRPCLRPCARLPRLPPSRRLPFSITTSCQQLPRTSPGRAGFSSLASLESRQNDRTRCFSALRSLSSSQLLPTTAPVLARHNSTTATSQMPLERKAIEIEKRIAAIPLERYRNFCIVAHIDHGKSTLSDRLLEHTGTITAGDGNKQVLDKLDVERERGITVKAQTCTMIYKHRDGLDYLLHLVDTPGHVDFRAEVTRSYSSCSGALLLVDASQGVQAQTVANFYLAFAQGLSLVPVVNKIDMASADVPRVLEQLETVFELDTSTAVKVSAKTGQGVGEILPAVISNVPAPVGDAKKPLRMLLVDSWYDTFKGVVLLVRLFDGTLKQGDKVYSFATGNEYIVGEVGIQYPDAVPQKVLRAGQVGYVFFNPGMKRIQDAKLGDTFTNVGCEDTVEPLPGFEEPKPMVFVAAFPTNQDDYGRLADSIAHLVLNDRSVTLQKDYSEALGAGWRLGFLGSLHCSVFQDRLRQEHGASIIITEPAVPTKIIWSTGEELIVTNPAEFPDPDDHRIRSATLYEPFVNATVTLPEEYVGRCIEICENARGVQKSLEFFTATQVILKYELPAASLVDDLFGKLKGATKGYATLDYEDAGWRQAQLVKLNLLVNKKAVDAVARIVHVSQVERLGRQWVTKFKEHVDRQMFEVIIQAAAGRRIVARETIKPFRKDVLAKLHASDITRRRKLLEKQKAGRKRLRAVGNVIIDQSAFQKFLSK.

The N-terminal 75 residues, 1-75 (MRGALCRPDV…TRCFSALRSL (75 aa)), are a transit peptide targeting the mitochondrion. The tr-type G domain occupies 119-301 (ERYRNFCIVA…AVISNVPAPV (183 aa)). Residues 128-135 (AHIDHGKS), 194-198 (DTPGH), and 248-251 (NKID) each bind GTP.

This sequence belongs to the TRAFAC class translation factor GTPase superfamily. Classic translation factor GTPase family. LepA subfamily.

Its subcellular location is the mitochondrion inner membrane. It catalyses the reaction GTP + H2O = GDP + phosphate + H(+). In terms of biological role, promotes mitochondrial protein synthesis. May act as a fidelity factor of the translation reaction, by catalyzing a one-codon backward translocation of tRNAs on improperly translocated ribosomes. Binds to mitochondrial ribosomes in a GTP-dependent manner. This is Translation factor guf1, mitochondrial (guf1) from Neurospora crassa (strain ATCC 24698 / 74-OR23-1A / CBS 708.71 / DSM 1257 / FGSC 987).